We begin with the raw amino-acid sequence, 503 residues long: ATP synthase subunit alpha (503 aa).

ATP is bound at residue Gly169–Thr176.

It belongs to the ATPase alpha/beta chains family. F-type ATPases have 2 components, CF(1) - the catalytic core - and CF(0) - the membrane proton channel. CF(1) has five subunits: alpha(3), beta(3), gamma(1), delta(1), epsilon(1). CF(0) has three main subunits: a(1), b(2) and c(9-12). The alpha and beta chains form an alternating ring which encloses part of the gamma chain. CF(1) is attached to CF(0) by a central stalk formed by the gamma and epsilon chains, while a peripheral stalk is formed by the delta and b chains.

The protein localises to the cell membrane. The enzyme catalyses ATP + H2O + 4 H(+)(in) = ADP + phosphate + 5 H(+)(out). Produces ATP from ADP in the presence of a proton gradient across the membrane. The alpha chain is a regulatory subunit. The polypeptide is ATP synthase subunit alpha (Macrococcus caseolyticus (strain JCSC5402) (Macrococcoides caseolyticum)).